The sequence spans 292 residues: Probable ABC transporter phosphonate/phosphite binding protein PhnD2 (292 aa).

The first 20 residues, 1–20, serve as a signal peptide directing secretion; that stretch reads MKLKSLLSVFTISIVALTSA. C21 carries the N-palmitoyl cysteine lipid modification. A lipid anchor (S-diacylglycerol cysteine) is attached at C21.

Belongs to the phosphate/phosphite/phosphonate binding protein family. As to quaternary structure, the complex may be composed of two ATP-binding proteins (PhnC2), two transmembrane proteins (PhnE2) and a solute-binding protein (PhnD2).

The protein resides in the cell membrane. Functionally, probably part of the ABC transporter complex PhnC2D2E2. Binds strongly to methylphosphonate (MPn), ethylphosphonate (EPn) and inorganic phosphite. This Prochlorococcus marinus (strain MIT 9301) protein is Probable ABC transporter phosphonate/phosphite binding protein PhnD2.